Reading from the N-terminus, the 583-residue chain is Estrogen receptor (583 aa).

The modulating stretch occupies residues 1 to 138; the sequence is MYPEESRGSG…GFEITKNTRF (138 aa). 2 consecutive NR C4-type zinc fingers follow at residues 139–159 and 175–199; these read CAVC…CEGC and CPAT…LRKC. The segment at residues 139–204 is a DNA-binding region (nuclear receptor); the sequence is CAVCSDYASG…RLRKCYEVGM (66 aa). The interval 205-265 is hinge; that stretch reads MKGGMRKDRG…PGGRSSLNNM (61 aa). A disordered region spans residues 220–263; sequence EKHGPAQRQTSQNLPTHKASPQDGRKRAMSSSSTSGPGGRSSLN. The NR LBD domain maps to 266-501; sequence PPDQVLLLLQ…DLLLEMLDAH (236 aa). The tract at residues 506–583 is disordered; the sequence is PVKPSQSWSQ…GSHSDCTRIP (78 aa). The segment covering 539-551 has biased composition (low complexity); that stretch reads ASSAGSSSGPQGS.

It belongs to the nuclear hormone receptor family. NR3 subfamily. Binds DNA as a homodimer. Can form a heterodimer with ER-beta.

It is found in the nucleus. In terms of biological role, the steroid hormones and their receptors are involved in the regulation of eukaryotic gene expression and affect cellular proliferation and differentiation in target tissues. This chain is Estrogen receptor (esr1), found in Oreochromis aureus (Israeli tilapia).